The sequence spans 84 residues: MKTQTLLFTFSLVLLMVATQTEALLGGLLQSLLGKRGLLDNLLGKRGLLFGKRALTNQDLFDLAYDPSLSAADMDALEMLLENY.

The first 23 residues, 1 to 23 (MKTQTLLFTFSLVLLMVATQTEA), serve as a signal peptide directing secretion. L33 carries the leucine amide modification. Positions 37 to 84 (GLLDNLLGKRGLLFGKRALTNQDLFDLAYDPSLSAADMDALEMLLENY) are excised as a propeptide.

The protein belongs to the non-disulfide-bridged peptide (NDBP) superfamily. Short antimicrobial peptide (group 4) family. In terms of tissue distribution, expressed by the venom gland.

Its subcellular location is the secreted. The protein resides in the target cell membrane. In terms of biological role, antimicrobial peptide. The polypeptide is Peptide Ctry2346 (Chaerilus tryznai (Scorpion)).